The chain runs to 440 residues: Tyrosine--tRNA ligase (440 aa).

Residue Tyr-46 coordinates L-tyrosine. The 'HIGH' region signature appears at Pro-51–Asn-60. Residues Tyr-181 and Gln-185 each coordinate L-tyrosine. The short motif at Lys-241 to Ser-245 is the 'KMSKS' region element. Residue Lys-244 participates in ATP binding. The S4 RNA-binding domain maps to Asp-373–Gly-430.

It belongs to the class-I aminoacyl-tRNA synthetase family. TyrS type 1 subfamily. As to quaternary structure, homodimer.

The protein resides in the cytoplasm. The enzyme catalyses tRNA(Tyr) + L-tyrosine + ATP = L-tyrosyl-tRNA(Tyr) + AMP + diphosphate + H(+). Functionally, catalyzes the attachment of tyrosine to tRNA(Tyr) in a two-step reaction: tyrosine is first activated by ATP to form Tyr-AMP and then transferred to the acceptor end of tRNA(Tyr). The sequence is that of Tyrosine--tRNA ligase from Bifidobacterium animalis subsp. lactis (strain AD011).